Consider the following 75-residue polypeptide: Rugosin-LK2 (75 aa).

Residues 1–24 (MFTMKKSLLFLFFLGTISLSFCEG) form the signal peptide. Residues 25–40 (ERSADEDDEGEMTEEE) constitute a propeptide that is removed on maturation.

In terms of tissue distribution, expressed by the skin glands.

The protein resides in the secreted. Its function is as follows. Has antimicrobial activity against Gram-positive bacteria S.aureus ATCC 2592 (MIC=10.0 uM), S.aureus ATCC 43300 (MIC=10.0 uM) and B.subtilis (MIC=30.0 uM), against Gram-negative bacteria E.coli ML-35P (MIC=10.0 uM), P.aeruginosa PA01 (MIC=2.5 uM) and P.aeruginosa ATCC 27853 (MIC=2.5 uM) and against fungus C.albicans ATCC 2002 (MIC=10.0 uM). The polypeptide is Rugosin-LK2 (Limnonectes kuhlii (Kuhl's Creek frog)).